Reading from the N-terminus, the 409-residue chain is Cuticle-degrading serine protease (409 aa).

A signal peptide spans 1–21 (MLTNGLISLLAIAGLATNAFA). Positions 22–123 (GPIRKVSNAG…VEQDTVVTTY (102 aa)) are excised as a propeptide. The Inhibitor I9 domain maps to 39–122 (KYIVVLKKGL…YVEQDTVVTT (84 aa)). The Peptidase S8 domain maps to 130–409 (TWGLDRISHE…PNKIAYNGYA (280 aa)). The Charge relay system role is filled by Asp164. A glycan (N-linked (GlcNAc...) asparagine) is linked at Asn178. His200 acts as the Charge relay system in catalysis. The N-linked (GlcNAc...) asparagine glycan is linked to Asn252. Ser353 functions as the Charge relay system in the catalytic mechanism.

Belongs to the peptidase S8 family.

The protein resides in the secreted. Its activity is regulated as follows. Inhibited by PMSF, SSI, the peptide Phe-Val and by Phe, but not by EDTA. In terms of biological role, hydrolyzes gelatin, casein, the chromogenic substrate azocoll and the cuticle of the nematode P.redivivus. Immobilizes P.redivivus. The sequence is that of Cuticle-degrading serine protease from Arthrobotrys oligospora (strain ATCC 24927 / CBS 115.81 / DSM 1491) (Nematode-trapping fungus).